We begin with the raw amino-acid sequence, 552 residues long: Glucose-6-phosphate isomerase (552 aa).

The active-site Proton donor is the E357. Residues H388 and K516 contribute to the active site. Positions 525-552 (ELASTKPPKHDSSTNALIERYRTRGCRS) are disordered.

This sequence belongs to the GPI family.

The protein localises to the cytoplasm. The enzyme catalyses alpha-D-glucose 6-phosphate = beta-D-fructose 6-phosphate. Its pathway is carbohydrate biosynthesis; gluconeogenesis. It functions in the pathway carbohydrate degradation; glycolysis; D-glyceraldehyde 3-phosphate and glycerone phosphate from D-glucose: step 2/4. Its function is as follows. Catalyzes the reversible isomerization of glucose-6-phosphate to fructose-6-phosphate. The protein is Glucose-6-phosphate isomerase of Laribacter hongkongensis (strain HLHK9).